Here is a 199-residue protein sequence, read N- to C-terminus: Putative AgrB-like protein (199 aa).

A run of 5 helical transmembrane segments spans residues 43-63 (IIIF…FSFI), 81-101 (YGCL…TRLF), 108-128 (FYIV…PCPN), 139-159 (LKIL…LSPL), and 165-185 (ILIS…KGVI).

This sequence belongs to the AgrB family.

It localises to the cell membrane. In terms of biological role, may be involved in the proteolytic processing of a quorum sensing system signal molecule precursor. This Clostridium beijerinckii (Clostridium MP) protein is Putative AgrB-like protein (cfg02).